The chain runs to 259 residues: Ubiquinone/menaquinone biosynthesis C-methyltransferase UbiE (259 aa).

Residues T82, D103, and 131–132 each bind S-adenosyl-L-methionine; that span reads NA.

The protein belongs to the class I-like SAM-binding methyltransferase superfamily. MenG/UbiE family.

The enzyme catalyses a 2-demethylmenaquinol + S-adenosyl-L-methionine = a menaquinol + S-adenosyl-L-homocysteine + H(+). It carries out the reaction a 2-methoxy-6-(all-trans-polyprenyl)benzene-1,4-diol + S-adenosyl-L-methionine = a 5-methoxy-2-methyl-3-(all-trans-polyprenyl)benzene-1,4-diol + S-adenosyl-L-homocysteine + H(+). It participates in quinol/quinone metabolism; menaquinone biosynthesis; menaquinol from 1,4-dihydroxy-2-naphthoate: step 2/2. It functions in the pathway cofactor biosynthesis; ubiquinone biosynthesis. Functionally, methyltransferase required for the conversion of demethylmenaquinol (DMKH2) to menaquinol (MKH2) and the conversion of 2-polyprenyl-6-methoxy-1,4-benzoquinol (DDMQH2) to 2-polyprenyl-3-methyl-6-methoxy-1,4-benzoquinol (DMQH2). This chain is Ubiquinone/menaquinone biosynthesis C-methyltransferase UbiE, found in Agrobacterium fabrum (strain C58 / ATCC 33970) (Agrobacterium tumefaciens (strain C58)).